The sequence spans 174 residues: Large ribosomal subunit protein uL10 (174 aa).

The protein belongs to the universal ribosomal protein uL10 family. As to quaternary structure, part of the ribosomal stalk of the 50S ribosomal subunit. The N-terminus interacts with L11 and the large rRNA to form the base of the stalk. The C-terminus forms an elongated spine to which L12 dimers bind in a sequential fashion forming a multimeric L10(L12)X complex.

Functionally, forms part of the ribosomal stalk, playing a central role in the interaction of the ribosome with GTP-bound translation factors. The polypeptide is Large ribosomal subunit protein uL10 (Acidiphilium cryptum (strain JF-5)).